Consider the following 329-residue polypeptide: Delta-aminolevulinic acid dehydratase (329 aa).

The Schiff-base intermediate with substrate role is filled by Lys-202. The 5-aminolevulinate site is built by Arg-212 and Arg-223. Position 239 (Glu-239) interacts with Mg(2+). Lys-254 acts as the Schiff-base intermediate with substrate in catalysis. 5-aminolevulinate contacts are provided by Ser-280 and Tyr-319.

This sequence belongs to the ALAD family. As to quaternary structure, homooctamer.

It catalyses the reaction 2 5-aminolevulinate = porphobilinogen + 2 H2O + H(+). The protein operates within porphyrin-containing compound metabolism; protoporphyrin-IX biosynthesis; coproporphyrinogen-III from 5-aminolevulinate: step 1/4. Its function is as follows. Catalyzes an early step in the biosynthesis of tetrapyrroles. Binds two molecules of 5-aminolevulinate per subunit, each at a distinct site, and catalyzes their condensation to form porphobilinogen. This chain is Delta-aminolevulinic acid dehydratase (hemB), found in Mycobacterium tuberculosis (strain CDC 1551 / Oshkosh).